The chain runs to 141 residues: Albumin-8 (141 aa).

An N-terminal signal peptide occupies residues 1 to 25 (MARFSIVFAAAGVLLLVAMAPVSEA). A propeptide spanning residues 26 to 38 (STTTIITTIIEEN) is cleaved from the precursor. Disulfide bonds link cysteine 49/cysteine 100, cysteine 62/cysteine 89, cysteine 90/cysteine 132, and cysteine 102/cysteine 139.

It belongs to the 2S seed storage albumins family. Heterodimer; disulfide-linked.

In terms of biological role, this is a 2S seed storage protein. The sequence is that of Albumin-8 from Helianthus annuus (Common sunflower).